The chain runs to 569 residues: Sulfite reductase [NADPH] hemoprotein beta-component (569 aa).

The [4Fe-4S] cluster site is built by cysteine 433, cysteine 439, cysteine 478, and cysteine 482. Cysteine 482 serves as a coordination point for siroheme.

It belongs to the nitrite and sulfite reductase 4Fe-4S domain family. In terms of assembly, alpha(8)-beta(8). The alpha component is a flavoprotein, the beta component is a hemoprotein. Siroheme is required as a cofactor. Requires [4Fe-4S] cluster as cofactor.

It carries out the reaction hydrogen sulfide + 3 NADP(+) + 3 H2O = sulfite + 3 NADPH + 4 H(+). It participates in sulfur metabolism; hydrogen sulfide biosynthesis; hydrogen sulfide from sulfite (NADPH route): step 1/1. Component of the sulfite reductase complex that catalyzes the 6-electron reduction of sulfite to sulfide. This is one of several activities required for the biosynthesis of L-cysteine from sulfate. The polypeptide is Sulfite reductase [NADPH] hemoprotein beta-component (Pseudoalteromonas atlantica (strain T6c / ATCC BAA-1087)).